The primary structure comprises 626 residues: tRNA uridine 5-carboxymethylaminomethyl modification enzyme MnmG (626 aa).

13 to 18 contacts FAD; the sequence is GGGHAG. 273–287 provides a ligand contact to NAD(+); sequence GPRYCPSIEDKIHRF.

The protein belongs to the MnmG family. As to quaternary structure, homodimer. Heterotetramer of two MnmE and two MnmG subunits. The cofactor is FAD.

The protein localises to the cytoplasm. Its function is as follows. NAD-binding protein involved in the addition of a carboxymethylaminomethyl (cmnm) group at the wobble position (U34) of certain tRNAs, forming tRNA-cmnm(5)s(2)U34. This chain is tRNA uridine 5-carboxymethylaminomethyl modification enzyme MnmG, found in Acinetobacter baumannii (strain AYE).